Reading from the N-terminus, the 98-residue chain is Large ribosomal subunit protein uL23 (98 aa).

This sequence belongs to the universal ribosomal protein uL23 family. As to quaternary structure, part of the 50S ribosomal subunit. Contacts protein L29, and trigger factor when it is bound to the ribosome.

Its function is as follows. One of the early assembly proteins it binds 23S rRNA. One of the proteins that surrounds the polypeptide exit tunnel on the outside of the ribosome. Forms the main docking site for trigger factor binding to the ribosome. The sequence is that of Large ribosomal subunit protein uL23 from Roseobacter denitrificans (strain ATCC 33942 / OCh 114) (Erythrobacter sp. (strain OCh 114)).